The primary structure comprises 820 residues: MNESYQPTLIEQLAQEYWEENETFEVKEDLSREKFYCLSMLPYPSGDLHMGHVRNYTIGDVIARYQIHKGRNVLQPMGWDAFGLPAENAAIQRELPPAEWTRKNIKKMRKQLKQLGFAYDWSREITTCDSTYYRWEQWLFLQLYKKGLAYKKNAIVNWDPVDQTVLANEQIVDGRGWRSGAVVERREISQWFLKITDYSEELLKDLDELKEWPEQVITMQRNWIGQSQGVIINFNLEKGPDKLQVYTTRPDTLMGVTYLAIAPEHPLAKERAKKSKKIAAFLKKCKQTRVAEADIATQEKEGIDSGLFAVHPLSKEKLPIWIANFVLMEYASGVVMAVPAHDERDHEFALKYDLPLKPVIEPADGHDWDYNQAAYTNPGKLINSGSFNDIDSKTAFNVIADYLKNNGAGSRQTHYRLRDWGISRQRYWGTPIPIIYCKTCGTVPVPENQLPVLLPEDIIPTGHGSPLKETASFYKTRCPVCNKPATRETDTMDTFVESSWYYARYSCPDQDKVMLDDRAKYWTPVDQYIGGIEHAVMHLLYARFMHKILRDLGLLNSNEPFIRLLTQGMVLKDGAKMSKSKGNVVTPQSLIKKYGADTVRLFIIFAAPPEQDLEWSDSGVEGAYRFLKKLWGFSYRIKDALLAINQQKERSNYQWEAPEHRQTRQQIHECLQQANIDMERLQFNTVVSAVMKILNILIKLTTDNDAEAHLIREGTGILLRLLSPITPHISHHLWQSLGFGGDILDTPWPRPDPKALQTTELELIVQINGKLRGRIQVPTEASKEIIESTALNQENVQRHLADKKIKKVIVVPKKLINIVV.

Positions proline 42–histidine 52 match the 'HIGH' region motif. The 'KMSKS' region motif lies at lysine 576–serine 580. ATP is bound at residue lysine 579.

This sequence belongs to the class-I aminoacyl-tRNA synthetase family.

The protein resides in the cytoplasm. It carries out the reaction tRNA(Leu) + L-leucine + ATP = L-leucyl-tRNA(Leu) + AMP + diphosphate. In Coxiella burnetii (strain RSA 493 / Nine Mile phase I), this protein is Leucine--tRNA ligase.